We begin with the raw amino-acid sequence, 62 residues long: Sauvatide (62 aa).

The first 24 residues, Met-1–Gly-24, serve as a signal peptide directing secretion. The propeptide occupies Glu-25–Glu-46. At Lys-58 the chain carries Lysine amide.

In terms of tissue distribution, expressed by the skin glands.

The protein resides in the secreted. Induces contraction of smooth muscle in isolated rat urinary bladder with an EC(50) value of 2.2nM. The protein is Sauvatide of Phyllomedusa sauvagei (Sauvage's leaf frog).